The primary structure comprises 598 residues: Probable polysaccharide biosynthesis protein EpsC (598 aa).

Transmembrane regions (helical) follow at residues 1 to 21, 31 to 51, 63 to 83, and 87 to 107; these read MIIALDTYLVLNSVIAGYQFL, GALLLTAVSLLLSYHVCAFLF, LGELIVLLKGITLSAAVTGVI, and VYHTMFFRLLTACWVLQLLSI.

This sequence belongs to the polysaccharide synthase family.

The protein localises to the cell membrane. In terms of biological role, involved in biofilm formation. This is Probable polysaccharide biosynthesis protein EpsC (epsC) from Bacillus subtilis (strain 168).